Reading from the N-terminus, the 599-residue chain is MNHIRNFSIIAHIDHGKSTLSDRIIQICGGLSEREMAAQVLDSMDLERERGITIKAQSVTLDYHSKDGQTYQLNFIDTPGHVDFSYEVSRSLAACEGALLVVDAGQGVEAQTLANCYTAMEMDLEVVPVLNKIDLPAADPERVAEEIEDIVGIDATDAIRCSAKTGVGVPDVLERLVRDIPAPEGDPNGPLQALIIDSWFDNYLGVVSLIRIKNGSLRKGDKVKVMSTGQSYNADRLGIFTPKRVDRDVLNCGEVGWLVCAIKDILGAPVGDTLTLTRNPAEKSLPGFKKVKPQVYAGLFPISSDDYESFRDALGKLSLNDASLFYEPESSTALGFGFRCGFLGLLHMEIIQERLEREYDLELITTAPTVVYEVITTNQETVYVDSPSKLPALNNIEELREPIAECHMLLPQEYLGNVITLCIEKRGTQTNMVYHGKQVALTYEIPMAEVVLDFFDRLKSTSRGYASLDYNFKRFQTSDMVRVDVLINNERVDALALITHRDNAQYRGRDLVEKMKELIPRQQFDIAIQAAIGNHIIARSTVKQLRKNVLAKCYGGDVSRKKKLLQKQKDGKKRMKQVGNVELPQEAFLAILHVGKDSK.

A tr-type G domain is found at 2-184; that stretch reads NHIRNFSIIA…RLVRDIPAPE (183 aa). GTP contacts are provided by residues 14-19 and 131-134; these read DHGKST and NKID.

The protein belongs to the TRAFAC class translation factor GTPase superfamily. Classic translation factor GTPase family. LepA subfamily.

The protein resides in the cell inner membrane. It carries out the reaction GTP + H2O = GDP + phosphate + H(+). Functionally, required for accurate and efficient protein synthesis under certain stress conditions. May act as a fidelity factor of the translation reaction, by catalyzing a one-codon backward translocation of tRNAs on improperly translocated ribosomes. Back-translocation proceeds from a post-translocation (POST) complex to a pre-translocation (PRE) complex, thus giving elongation factor G a second chance to translocate the tRNAs correctly. Binds to ribosomes in a GTP-dependent manner. The chain is Elongation factor 4 from Yersinia pestis (strain Pestoides F).